Here is a 267-residue protein sequence, read N- to C-terminus: Undecaprenyl-diphosphatase (267 aa).

The next 7 helical transmembrane spans lie at leucine 7 to leucine 29, phenylalanine 41 to phenylalanine 61, leucine 69 to valine 89, leucine 96 to isoleucine 116, alanine 173 to isoleucine 193, isoleucine 207 to phenylalanine 227, and phenylalanine 239 to leucine 259.

This sequence belongs to the UppP family.

The protein resides in the cell inner membrane. It catalyses the reaction di-trans,octa-cis-undecaprenyl diphosphate + H2O = di-trans,octa-cis-undecaprenyl phosphate + phosphate + H(+). Catalyzes the dephosphorylation of undecaprenyl diphosphate (UPP). Confers resistance to bacitracin. The chain is Undecaprenyl-diphosphatase from Campylobacter jejuni subsp. jejuni serotype O:6 (strain 81116 / NCTC 11828).